Here is a 179-residue protein sequence, read N- to C-terminus: Transcription initiation factor TFIID subunit 10 (179 aa).

The interval M1–L23 is disordered.

It belongs to the TAF10 family. In terms of assembly, component of the TFIID basal transcription factor complex, composed of TATA-box-binding protein tbp-1, and a number of TBP-associated factors (TAFs).

It is found in the nucleus. In terms of biological role, the TFIID basal transcription factor complex plays a major role in the initiation of RNA polymerase II (Pol II)-dependent transcription. TFIID recognizes and binds promoters via its subunit tbp-1, a TATA-box-binding protein, and promotes assembly of the pre-initiation complex (PIC). The TFIID complex consists of tbp-1 and TBP-associated factors (TAFs), including taf-10. Essential for early embryonic development, but not required for transcription of some genes; probably acts via activating transcription initiation by RNA Pol II, as part of the TFIID complex. The chain is Transcription initiation factor TFIID subunit 10 from Caenorhabditis elegans.